A 322-amino-acid polypeptide reads, in one-letter code: Ribose-phosphate pyrophosphokinase 1 (322 aa).

Residues 39–41 and 98–99 each bind ATP; these read DGE and RQ. Residues His132 and Asp173 each contribute to the Mg(2+) site. Residue Lys196 is part of the active site. D-ribose 5-phosphate is bound by residues Arg198, Asp224, and 228 to 232; that span reads DTAGT.

It belongs to the ribose-phosphate pyrophosphokinase family. Class I subfamily. Homohexamer. Mg(2+) serves as cofactor.

It is found in the cytoplasm. It catalyses the reaction D-ribose 5-phosphate + ATP = 5-phospho-alpha-D-ribose 1-diphosphate + AMP + H(+). The protein operates within metabolic intermediate biosynthesis; 5-phospho-alpha-D-ribose 1-diphosphate biosynthesis; 5-phospho-alpha-D-ribose 1-diphosphate from D-ribose 5-phosphate (route I): step 1/1. Involved in the biosynthesis of the central metabolite phospho-alpha-D-ribosyl-1-pyrophosphate (PRPP) via the transfer of pyrophosphoryl group from ATP to 1-hydroxyl of ribose-5-phosphate (Rib-5-P). This Streptococcus pneumoniae serotype 4 (strain ATCC BAA-334 / TIGR4) protein is Ribose-phosphate pyrophosphokinase 1.